Consider the following 162-residue polypeptide: RxLR effector protein PITG_06094 (162 aa).

An N-terminal signal peptide occupies residues 1–20 (MRLSFILAATLTGLLACATA). The RxLR-dEER signature appears at 51–91 (RFLRAYNDAEDDSEDPKNVKNTVDAKPADESEDSELSEEER). The disordered stretch occupies residues 56 to 88 (YNDAEDDSEDPKNVKNTVDAKPADESEDSELSE).

Belongs to the RxLR effector family.

Its subcellular location is the secreted. It is found in the host cytoplasm. It localises to the host nucleus. The protein localises to the host nucleolus. Effector that enhances P.infestans colonization of Nicotiana benthamiana leaves. The sequence is that of RxLR effector protein PITG_06094 from Phytophthora infestans (strain T30-4) (Potato late blight agent).